We begin with the raw amino-acid sequence, 115 residues long: UPF0738 protein SACOL1009 (115 aa).

The protein belongs to the UPF0738 family.

This is UPF0738 protein SACOL1009 from Staphylococcus aureus (strain COL).